Consider the following 650-residue polypeptide: Acetyl-coenzyme A synthetase (650 aa).

CoA contacts are provided by residues 191–194 (RAGR), Thr311, and Asn335. ATP-binding positions include 387–389 (GEP), 411–416 (DTWWQT), Asp500, and Arg515. Ser523 lines the CoA pocket. Residue Arg526 coordinates ATP. Residues Val537, His539, and Val542 each coordinate Mg(2+). Position 584 (Arg584) interacts with CoA. Lys609 bears the N6-acetyllysine mark.

Belongs to the ATP-dependent AMP-binding enzyme family. Mg(2+) is required as a cofactor. Post-translationally, acetylated. Deacetylation by the SIR2-homolog deacetylase activates the enzyme.

It carries out the reaction acetate + ATP + CoA = acetyl-CoA + AMP + diphosphate. Functionally, catalyzes the conversion of acetate into acetyl-CoA (AcCoA), an essential intermediate at the junction of anabolic and catabolic pathways. AcsA undergoes a two-step reaction. In the first half reaction, AcsA combines acetate with ATP to form acetyl-adenylate (AcAMP) intermediate. In the second half reaction, it can then transfer the acetyl group from AcAMP to the sulfhydryl group of CoA, forming the product AcCoA. This is Acetyl-coenzyme A synthetase from Shewanella halifaxensis (strain HAW-EB4).